The chain runs to 158 residues: Rhombotin-2 (158 aa).

LIM zinc-binding domains follow at residues 30–89 (CGGC…RLFG) and 94–153 (CASC…EWTK).

Interacts with BEX2 and KDM5A. Interacts via its LIM domains with ELF2 and LDB1. Also interacts with basic helix-loop-helix protein TAL1/SCL and can assemble in a complex with LMO2 and TAL1/SCL. Expressed in early mouse development in central nervous system, lung, kidney, liver and spleen but only very low levels occur in thymus.

The protein localises to the nucleus. Functionally, acts with TAL1/SCL to regulate red blood cell development. Also acts with LDB1 to maintain erythroid precursors in an immature state. The sequence is that of Rhombotin-2 (Lmo2) from Mus musculus (Mouse).